We begin with the raw amino-acid sequence, 150 residues long: Non-specific lipid transfer protein GPI-anchored 7 (150 aa).

A signal peptide spans 1-25; it reads MTKTMMIFAAAMTVMALLLVPTIEA. 4 disulfide bridges follow: cysteine 29-cysteine 66, cysteine 36-cysteine 50, cysteine 51-cysteine 92, and cysteine 64-cysteine 101. N-linked (GlcNAc...) asparagine glycans are attached at residues asparagine 41, asparagine 79, and asparagine 93. The tract at residues 103-125 is disordered; it reads AKGAPSPKASLPPPAPAGNTKKD. Aspartate 125 is lipidated: GPI-anchor amidated aspartate. Residues 126 to 150 constitute a propeptide, removed in mature form; sequence AGAGNKLAGYGVTTVILSLISSIFF.

The protein belongs to the plant LTP family. Up-regulated in the epidermis of stems.

It is found in the cell membrane. In terms of biological role, probable lipid transfer protein. This is Non-specific lipid transfer protein GPI-anchored 7 from Arabidopsis thaliana (Mouse-ear cress).